The primary structure comprises 231 residues: MPAIAPLASPPQSQEQLLAQARQLAGYSLGELAALAGIPIPRDLKRDKGWTGILLELWLGASAGSKPEQDFAALGVELKTIPIDSRGRPLETTFVCVAPLTGNSGVTWESSHVRHKLQRVLWIPVEGERTIPLAARRVGAPLLWSPDEDEERQLRMDWEELMDLIVLGEVERITARHGEVLQLRPKAANSKALTEAIGARGETILTLPRGFYLKKNFTAALLARHFLLQHD.

It belongs to the MutH family.

Its subcellular location is the cytoplasm. In terms of biological role, sequence-specific endonuclease that cleaves unmethylated GATC sequences. It is involved in DNA mismatch repair. The chain is DNA mismatch repair protein MutH from Klebsiella pneumoniae subsp. pneumoniae (strain ATCC 700721 / MGH 78578).